Here is a 336-residue protein sequence, read N- to C-terminus: Holliday junction branch migration complex subunit RuvB (336 aa).

The large ATPase domain (RuvB-L) stretch occupies residues 4–184; it reads ADRLISAGTT…FGIVQRLEFY (181 aa). ATP is bound by residues isoleucine 23, arginine 24, glycine 65, lysine 68, threonine 69, threonine 70, 131–133, arginine 174, tyrosine 184, and arginine 221; that span reads EDY. Threonine 69 is a Mg(2+) binding site. The small ATPAse domain (RuvB-S) stretch occupies residues 185 to 255; it reads QVPDLQYIVS…IAAQALDMLN (71 aa). The segment at 258 to 336 is head domain (RuvB-H); that stretch reads AEGFDYMDRK…HFGITPPEMP (79 aa). Residues arginine 294, arginine 313, and arginine 318 each contribute to the DNA site.

Belongs to the RuvB family. As to quaternary structure, homohexamer. Forms an RuvA(8)-RuvB(12)-Holliday junction (HJ) complex. HJ DNA is sandwiched between 2 RuvA tetramers; dsDNA enters through RuvA and exits via RuvB. An RuvB hexamer assembles on each DNA strand where it exits the tetramer. Each RuvB hexamer is contacted by two RuvA subunits (via domain III) on 2 adjacent RuvB subunits; this complex drives branch migration. In the full resolvosome a probable DNA-RuvA(4)-RuvB(12)-RuvC(2) complex forms which resolves the HJ.

Its subcellular location is the cytoplasm. It carries out the reaction ATP + H2O = ADP + phosphate + H(+). Its function is as follows. The RuvA-RuvB-RuvC complex processes Holliday junction (HJ) DNA during genetic recombination and DNA repair, while the RuvA-RuvB complex plays an important role in the rescue of blocked DNA replication forks via replication fork reversal (RFR). RuvA specifically binds to HJ cruciform DNA, conferring on it an open structure. The RuvB hexamer acts as an ATP-dependent pump, pulling dsDNA into and through the RuvAB complex. RuvB forms 2 homohexamers on either side of HJ DNA bound by 1 or 2 RuvA tetramers; 4 subunits per hexamer contact DNA at a time. Coordinated motions by a converter formed by DNA-disengaged RuvB subunits stimulates ATP hydrolysis and nucleotide exchange. Immobilization of the converter enables RuvB to convert the ATP-contained energy into a lever motion, pulling 2 nucleotides of DNA out of the RuvA tetramer per ATP hydrolyzed, thus driving DNA branch migration. The RuvB motors rotate together with the DNA substrate, which together with the progressing nucleotide cycle form the mechanistic basis for DNA recombination by continuous HJ branch migration. Branch migration allows RuvC to scan DNA until it finds its consensus sequence, where it cleaves and resolves cruciform DNA. In Shigella flexneri serotype 5b (strain 8401), this protein is Holliday junction branch migration complex subunit RuvB.